The following is a 283-amino-acid chain: ACT domain-containing protein DS12, chloroplastic (283 aa).

The N-terminal 56 residues, 1 to 56, are a transit peptide targeting the chloroplast; that stretch reads MAEMAVTAALRPCSGVSPAVSGTSHRRRRPAAWRALAPPPPHAGLRLSSPAVRVPR. The interval 14–78 is disordered; that stretch reads SGVSPAVSGT…SNTDTVPTPK (65 aa). Residues 48–63 are compositionally biased toward low complexity; sequence SSPAVRVPRAASSAAV. ACT domains follow at residues 91–171 and 206–276; these read IVEI…ASSQ and LLVV…LRRP.

It localises to the plastid. The protein localises to the chloroplast. The sequence is that of ACT domain-containing protein DS12, chloroplastic from Oryza sativa subsp. indica (Rice).